Consider the following 279-residue polypeptide: Tryptophan synthase alpha chain (279 aa).

Catalysis depends on proton acceptor residues Glu-50 and Asp-61.

The protein belongs to the TrpA family. In terms of assembly, tetramer of two alpha and two beta chains.

The enzyme catalyses (1S,2R)-1-C-(indol-3-yl)glycerol 3-phosphate + L-serine = D-glyceraldehyde 3-phosphate + L-tryptophan + H2O. Its pathway is amino-acid biosynthesis; L-tryptophan biosynthesis; L-tryptophan from chorismate: step 5/5. Functionally, the alpha subunit is responsible for the aldol cleavage of indoleglycerol phosphate to indole and glyceraldehyde 3-phosphate. The polypeptide is Tryptophan synthase alpha chain (Brucella suis (strain ATCC 23445 / NCTC 10510)).